Reading from the N-terminus, the 207-residue chain is TM2 domain-containing protein 1 (207 aa).

The signal sequence occupies residues 1 to 37 (MAAAWPSGPSAPEAVTARLVGVLWFVSVTTGPWGAVA). The Extracellular portion of the chain corresponds to 40 to 128 (AGGEESLKCE…YSYKVAVALS (89 aa)). Asparagine 72, asparagine 75, asparagine 87, and asparagine 96 each carry an N-linked (GlcNAc...) asparagine glycan. The TM2 domain occupies 118-166 (GYSYKVAVALSLFLGWLGADRFYLGYPALGLLKFCTVGFCGIGSLIDFI). A helical membrane pass occupies residues 129-149 (LFLGWLGADRFYLGYPALGLL). The Cytoplasmic portion of the chain corresponds to 150–153 (KFCT). Residues 154 to 174 (VGFCGIGSLIDFILISMQIVG) form a helical membrane-spanning segment. The Extracellular segment spans residues 175 to 207 (PSDGSSYIIDYYGTRLTRLSITNETFRKTQLYP). The N-linked (GlcNAc...) asparagine glycan is linked to asparagine 197.

The protein belongs to the TM2 family. In terms of assembly, interacts with APP beta-APP42 (amyloid-beta protein 42). In terms of processing, N-glycosylated. In terms of tissue distribution, widely expressed.

Its subcellular location is the membrane. Its function is as follows. May participate in amyloid-beta-induced apoptosis via its interaction with beta-APP42. The polypeptide is TM2 domain-containing protein 1 (TM2D1) (Homo sapiens (Human)).